The following is a 358-amino-acid chain: MTLPRSEISAGDAVVFDAVSKRFPASGGNTAFTALDNVSLAVARGSITGIIGRSGAGKSTLIRLVNGLEKPSSGKVFVDGVDVGALDEAGLRDLRRSVGMIFQHFNLLSSRTVFGNVALPLEIAGMDRRAIEQRVRPLLELVGLADKHGRYPAELSGGQKQRIGIARALATEPKLLLSDEATSALDPETTQSILELLRRINAELGLTVLLITHEMEVVKAVTSDVAVIDKGEIVERGHTFDVFTHSRHETTRALLSGLAGSKLPEAVARGLKPAAASGDRVVVRLTFFGAAAERPLISQLIQSVGAEVNIIAGTIDEIGGKPYGSLVVAYGADAETSGKAERFFTENGLVTEVLGYVA.

Residues 14–255 (VVFDAVSKRF…SRHETTRALL (242 aa)) form the ABC transporter domain. Residue 52 to 59 (GRSGAGKS) participates in ATP binding.

It belongs to the ABC transporter superfamily. Methionine importer (TC 3.A.1.24) family. As to quaternary structure, the complex is composed of two ATP-binding proteins (MetN), two transmembrane proteins (MetI) and a solute-binding protein (MetQ).

It localises to the cell inner membrane. It catalyses the reaction L-methionine(out) + ATP + H2O = L-methionine(in) + ADP + phosphate + H(+). The catalysed reaction is D-methionine(out) + ATP + H2O = D-methionine(in) + ADP + phosphate + H(+). In terms of biological role, part of the ABC transporter complex MetNIQ involved in methionine import. Responsible for energy coupling to the transport system. The protein is Methionine import ATP-binding protein MetN of Rhizobium meliloti (strain 1021) (Ensifer meliloti).